Here is a 127-residue protein sequence, read N- to C-terminus: Fumarate reductase subunit C (127 aa).

The next 3 helical transmembrane spans lie at alanine 30–valine 50, isoleucine 67–phenylalanine 87, and isoleucine 107–valine 127.

This sequence belongs to the FrdC family. In terms of assembly, part of an enzyme complex containing four subunits: a flavoprotein (FrdA), an iron-sulfur protein (FrdB), and two hydrophobic anchor proteins (FrdC and FrdD).

Its subcellular location is the cell inner membrane. Its function is as follows. Anchors the catalytic components of the fumarate reductase complex to the cell membrane, binds quinones. The protein is Fumarate reductase subunit C of Photobacterium profundum (strain SS9).